The primary structure comprises 229 residues: Small ribosomal subunit protein uS3 (229 aa).

Positions 39–109 (MRKYIKEQLM…QVNIDIVEIR (71 aa)) constitute a KH type-2 domain. Residues 210-229 (VVSQQNSRPSGPRGPRRPRA) form a disordered region.

The protein belongs to the universal ribosomal protein uS3 family. Part of the 30S ribosomal subunit. Forms a tight complex with proteins S10 and S14.

Functionally, binds the lower part of the 30S subunit head. Binds mRNA in the 70S ribosome, positioning it for translation. The polypeptide is Small ribosomal subunit protein uS3 (Akkermansia muciniphila (strain ATCC BAA-835 / DSM 22959 / JCM 33894 / BCRC 81048 / CCUG 64013 / CIP 107961 / Muc)).